We begin with the raw amino-acid sequence, 269 residues long: 5'-nucleotidase SurE (269 aa).

A divalent metal cation is bound by residues D11, D12, S43, and N101.

This sequence belongs to the SurE nucleotidase family. Requires a divalent metal cation as cofactor.

It localises to the cytoplasm. It carries out the reaction a ribonucleoside 5'-phosphate + H2O = a ribonucleoside + phosphate. Functionally, nucleotidase that shows phosphatase activity on nucleoside 5'-monophosphates. This chain is 5'-nucleotidase SurE, found in Prochlorococcus marinus subsp. pastoris (strain CCMP1986 / NIES-2087 / MED4).